A 354-amino-acid chain; its full sequence is uncharacterized protein (354 aa).

The signal sequence occupies residues 1 to 21; it reads MRYLLIVITFFMGFSSLPAWA.

To E.coli YbgO.

In terms of biological role, may be involved in a fimbrial system chaperoned by YqiH and exported by YqiG. This is an uncharacterized protein from Escherichia coli (strain K12).